The chain runs to 214 residues: Small ribosomal subunit protein uS5 (214 aa).

The tract at residues 1–61 (MTDSSPQSNP…QERDSEWQER (61 aa)) is disordered. Over residues 9–29 (NPNAVPGAADVPAAAEGQQQQ) the composition is skewed to low complexity. A compositionally biased stretch (basic and acidic residues) spans 30-60 (EQRRGRGDRDGRRGDRRGGRRGQERDSEWQE). In terms of domain architecture, S5 DRBM spans 58–121 (WQERVVQIRR…ADGKKHLVKV (64 aa)).

It belongs to the universal ribosomal protein uS5 family. In terms of assembly, part of the 30S ribosomal subunit. Contacts proteins S4 and S8.

In terms of biological role, with S4 and S12 plays an important role in translational accuracy. Its function is as follows. Located at the back of the 30S subunit body where it stabilizes the conformation of the head with respect to the body. This is Small ribosomal subunit protein uS5 from Synechococcus sp. (strain CC9605).